The chain runs to 663 residues: UvrABC system protein B (663 aa).

Positions 1–10 (MIDKRDDKPF) are enriched in basic and acidic residues. The tract at residues 1–23 (MIDKRDDKPFKLKSKYKPSGDQP) is disordered. The region spanning 31-271 (DNIEGGEKAQ…EQSIAKIQAE (241 aa)) is the Helicase ATP-binding domain. 44 to 51 (GATGTGKT) lines the ATP pocket. Residues 97-120 (YYDYYQPEAYVPSSDTYIEKDSSV) carry the Beta-hairpin motif. One can recognise a Helicase C-terminal domain in the interval 435-601 (QMDDLLGEIN…TIKKDIRGLI (167 aa)). The UVR domain occupies 627-662 (KEAINALQKQMQEAAELLDFELAAQMRDLILELKLM).

Belongs to the UvrB family. Forms a heterotetramer with UvrA during the search for lesions. Interacts with UvrC in an incision complex.

The protein resides in the cytoplasm. The UvrABC repair system catalyzes the recognition and processing of DNA lesions. A damage recognition complex composed of 2 UvrA and 2 UvrB subunits scans DNA for abnormalities. Upon binding of the UvrA(2)B(2) complex to a putative damaged site, the DNA wraps around one UvrB monomer. DNA wrap is dependent on ATP binding by UvrB and probably causes local melting of the DNA helix, facilitating insertion of UvrB beta-hairpin between the DNA strands. Then UvrB probes one DNA strand for the presence of a lesion. If a lesion is found the UvrA subunits dissociate and the UvrB-DNA preincision complex is formed. This complex is subsequently bound by UvrC and the second UvrB is released. If no lesion is found, the DNA wraps around the other UvrB subunit that will check the other stand for damage. In Streptococcus pyogenes serotype M4 (strain MGAS10750), this protein is UvrABC system protein B.